We begin with the raw amino-acid sequence, 1457 residues long: ABC transporter G family member 36 (1457 aa).

A disordered region spans residues 14 to 43 (RLGGSMRGDSGSMWRRGDDVFSRSSREEDD). The span at 28–39 (RRGDDVFSRSSR) shows a compositional bias: basic and acidic residues. The 274-residue stretch at 164–437 (GNALGILPNR…FESTGFKCPD (274 aa)) folds into the ABC transporter 1 domain. 197 to 204 (GPPGSGKT) serves as a coordination point for ATP. Positions 515-728 (ELLKANIDRE…AQNAISVNEL (214 aa)) constitute an ABC transmembrane type-2 1 domain. 7 consecutive transmembrane segments (helical) span residues 533-553 (FVYM…MTLF), 565-585 (SGGI…FNGF), 621-641 (IPIT…VIGF), 653-673 (LLML…GGAA), 677-697 (IVAN…GGFI), 706-726 (WWIW…ISVN), and 765-785 (IGFG…TLAL). The tract at residues 821–841 (SSGSTRRPMGNGTENDSTIVD) is disordered. The ABC transporter 2 domain maps to 860–1112 (LSFDNVRYSV…ELIKYFESIP (253 aa)). 905–912 (GVSGAGKT) serves as a coordination point for ATP. Positions 1185 to 1399 (TQCMACLWKQ…TLYGLVVSQF (215 aa)) constitute an ABC transmembrane type-2 2 domain. The next 7 helical transmembrane spans lie at 1209–1229 (FFFT…LGGK), 1244–1264 (YAAV…VVAV), 1292–1312 (IPYT…MIGF), 1319–1339 (FFWY…YGMM), 1349–1369 (IASI…GFVI), 1380–1400 (WYCW…SQFG), and 1429–1449 (WVAT…GFAI).

Belongs to the ABC transporter superfamily. ABCG family. PDR (TC 3.A.1.205) subfamily.

It localises to the membrane. In terms of biological role, may be a general defense protein. The protein is ABC transporter G family member 36 of Oryza sativa subsp. indica (Rice).